The chain runs to 155 residues: NADH-ubiquinone oxidoreductase chain 6 (155 aa).

A run of 4 helical transmembrane segments spans residues 1 to 21, 42 to 62, 71 to 91, and 121 to 141; these read MLGS…PLAF, WISL…FIYV, FAVD…SFLV, and LTML…LLVI.

Belongs to the complex I subunit 6 family.

It is found in the mitochondrion membrane. The enzyme catalyses a ubiquinone + NADH + 5 H(+)(in) = a ubiquinol + NAD(+) + 4 H(+)(out). Core subunit of the mitochondrial membrane respiratory chain NADH dehydrogenase (Complex I) that is believed to belong to the minimal assembly required for catalysis. Complex I functions in the transfer of electrons from NADH to the respiratory chain. The immediate electron acceptor for the enzyme is believed to be ubiquinone. This chain is NADH-ubiquinone oxidoreductase chain 6 (ND6), found in Artemia franciscana (Brine shrimp).